Consider the following 158-residue polypeptide: Putative pre-16S rRNA nuclease (158 aa).

It belongs to the YqgF nuclease family.

The protein resides in the cytoplasm. Could be a nuclease involved in processing of the 5'-end of pre-16S rRNA. The sequence is that of Putative pre-16S rRNA nuclease from Paracoccus denitrificans (strain Pd 1222).